Reading from the N-terminus, the 452-residue chain is Maltoporin (452 aa).

Residues 1–25 (MMITLRKLPLAVAVAAGVMSAQAMA) form the signal peptide.

It belongs to the porin LamB (TC 1.B.3) family. Homotrimer formed of three 18-stranded antiparallel beta-barrels, containing three independent channels.

It localises to the cell outer membrane. It catalyses the reaction beta-maltose(in) = beta-maltose(out). Functionally, involved in the transport of maltose and maltodextrins. In Salmonella choleraesuis (strain SC-B67), this protein is Maltoporin.